A 576-amino-acid polypeptide reads, in one-letter code: Ecdysone receptor (576 aa).

The interval 1-162 (MSLGARGYRR…GPAPRQQEEL (162 aa)) is modulating. The interval 87 to 154 (CTMEQQQPQP…GEARRQKKGP (68 aa)) is disordered. The segment covering 91-106 (QQQPQPQQQPQQTQPL) has biased composition (low complexity). Residues 107–117 (PSMPLPMPPTT) are compositionally biased toward pro residues. NR C4-type zinc fingers lie at residues 163–183 (CLVC…CEGC) and 199–223 (CKFG…LKKC). Positions 163–235 (CLVCGDRASG…VGMRPECVVP (73 aa)) form a DNA-binding region, nuclear receptor. The segment at 245–269 (EKKAQREKDKLPVSTTTVDDHMPPI) is disordered. An NR LBD domain is found at 314–548 (NQKSLIARLV…FLEEIWDVAD (235 aa)).

The protein belongs to the nuclear hormone receptor family. NR1 subfamily.

The protein resides in the nucleus. Receptor for ecdysone. Binds to ecdysone response elements (ECRES). In Heliothis virescens (Tobacco budworm moth), this protein is Ecdysone receptor (EcR).